The chain runs to 612 residues: MFS siderochrome iron transporter B (612 aa).

At 1–86 (MLHVLSVGPS…GAQAGVKKIE (86 aa)) the chain is on the cytoplasmic side. Residues 55–78 (DKEAAHAPANAETNNEEANPSDGA) form a disordered region. Over residues 60-72 (HAPANAETNNEEA) the composition is skewed to low complexity. Residues 87-104 (AVTLSWTRGTAIWFLTLV) traverse the membrane as a helical segment. Residues 105-127 (NDFRLSMYTSLNAYATSSFLGHS) are Extracellular-facing. Residues 128-148 (LLTVINIVSYVMGGSVYIPMA) traverse the membrane as a helical segment. Residues 149–156 (KALDLWGR) lie on the Cytoplasmic side of the membrane. The chain crosses the membrane as a helical span at residues 157-177 (AEGFLLMTFFCILGLILLASS). The Extracellular portion of the chain corresponds to 178 to 187 (QNLPTYCAGQ). The helical transmembrane segment at 188–208 (VFYKVGFGGLSYTWNVLAADV) threads the bilayer. Over 209 to 215 (TNLRNRG) the chain is Cytoplasmic. A helical transmembrane segment spans residues 216–236 (LAFAFTSSPALISAFAGSKAA). Over 237 to 246 (SDLLAHSTWR) the chain is Extracellular. A helical membrane pass occupies residues 247–267 (WGFGMWAIILPVVALPIYGLL). Topologically, residues 268-302 (AYHLRQAEKKGVLVKETRDWSITPKTVWWAIMEFD) are cytoplasmic. The helical transmembrane segment at 303-323 (LPGVLLFAGGFVIFLLPFTLA) threads the bilayer. Residues 324–334 (ATAPHGYQTDY) lie on the Extracellular side of the membrane. The helical transmembrane segment at 335 to 355 (IIAMITLGLALIIAFGFYEML) threads the bilayer. At 356–370 (VAPVPFLNYKFLIDR) the chain is on the cytoplasmic side. Residues 371–393 (TVLGACLLDMTYQVSYYCYASYL) traverse the membrane as a helical segment. At 394–409 (PSFLQVVYELDVATAG) the chain is on the extracellular side. The chain crosses the membrane as a helical span at residues 410–430 (YVTNTFSVVSFVFLFFAGWLI). At 431 to 435 (RWTGR) the chain is on the cytoplasmic side. The helical transmembrane segment at 436–456 (FKWILWVCVPLYIFGLGLMIH) threads the bilayer. At 457-463 (FRQPGGY) the chain is on the extracellular side. Residues 464–484 (IGYIVMCEIFFSVAGSVFILC) traverse the membrane as a helical segment. Residues 485 to 498 (VQLAVLASVDHQHV) are Cytoplasmic-facing. Residues 499–519 (AAVLALLFVMGSIGGSIGSAI) form a helical membrane-spanning segment. The Extracellular portion of the chain corresponds to 520-575 (CGAIWTSTFLSRLERNLPASAMPDLSLIYSSLPTQLSYPVGSATRTAIVEAYGYAQ). Residues 576 to 596 (ARMLIAGTAFMVLGFIWVGMM) traverse the membrane as a helical segment. The Cytoplasmic segment spans residues 597-612 (RNLNVKNMTQTKGNVV).

It belongs to the major facilitator superfamily.

It is found in the cell tip. The protein resides in the cytoplasmic vesicle membrane. Its subcellular location is the cell membrane. In terms of biological role, major facilitator transporter involved in triacetylfusarinine C (TAFC) uptake. Can also transport ferricrocin and coprogen, but not ferrichrysin. MirB plays a crucial role for virulence in a murine model of pulmonary aspergillosis, indicating that TAFC-mediated iron uptake plays a dominant role during infection. This is MFS siderochrome iron transporter B from Aspergillus fumigatus (strain ATCC MYA-4609 / CBS 101355 / FGSC A1100 / Af293) (Neosartorya fumigata).